The following is a 132-amino-acid chain: Small ribosomal subunit protein uS8 (132 aa).

Belongs to the universal ribosomal protein uS8 family. As to quaternary structure, part of the 30S ribosomal subunit. Contacts proteins S5 and S12.

One of the primary rRNA binding proteins, it binds directly to 16S rRNA central domain where it helps coordinate assembly of the platform of the 30S subunit. This is Small ribosomal subunit protein uS8 from Rhizobium johnstonii (strain DSM 114642 / LMG 32736 / 3841) (Rhizobium leguminosarum bv. viciae).